The primary structure comprises 382 residues: 3-dehydroquinate synthase (382 aa).

NAD(+) contacts are provided by residues 115–119, 139–140, K152, and K161; these read GVVGD and TS. Residues E194, H256, and H274 each contribute to the Zn(2+) site.

This sequence belongs to the sugar phosphate cyclases superfamily. Dehydroquinate synthase family. Co(2+) serves as cofactor. Zn(2+) is required as a cofactor. The cofactor is NAD(+).

It is found in the cytoplasm. The enzyme catalyses 7-phospho-2-dehydro-3-deoxy-D-arabino-heptonate = 3-dehydroquinate + phosphate. The protein operates within metabolic intermediate biosynthesis; chorismate biosynthesis; chorismate from D-erythrose 4-phosphate and phosphoenolpyruvate: step 2/7. Catalyzes the conversion of 3-deoxy-D-arabino-heptulosonate 7-phosphate (DAHP) to dehydroquinate (DHQ). This chain is 3-dehydroquinate synthase, found in Rhodopseudomonas palustris (strain BisB18).